Reading from the N-terminus, the 339-residue chain is Protein pelota homolog (339 aa).

The protein belongs to the eukaryotic release factor 1 family. Pelota subfamily. Monomer. A divalent metal cation serves as cofactor.

It is found in the cytoplasm. Its function is as follows. May function in recognizing stalled ribosomes, interact with stem-loop structures in stalled mRNA molecules, and effect endonucleolytic cleavage of the mRNA. May play a role in the release non-functional ribosomes and degradation of damaged mRNAs. Has endoribonuclease activity. This is Protein pelota homolog from Picrophilus torridus (strain ATCC 700027 / DSM 9790 / JCM 10055 / NBRC 100828 / KAW 2/3).